A 43-amino-acid chain; its full sequence is Protein PsbN (43 aa).

Residues 4 to 24 (AIVLIISVGAALVAVTGYGIY) form a helical membrane-spanning segment.

The protein belongs to the PsbN family.

It localises to the cellular thylakoid membrane. May play a role in photosystem I and II biogenesis. In Trichormus variabilis (strain ATCC 29413 / PCC 7937) (Anabaena variabilis), this protein is Protein PsbN.